A 625-amino-acid chain; its full sequence is Glutamine--fructose-6-phosphate aminotransferase [isomerizing] (625 aa).

Residue C2 is the Nucleophile; for GATase activity of the active site. Residues 2–229 (CGLVGYVGQR…QDQAVVITAD (228 aa)) form the Glutamine amidotransferase type-2 domain. 2 consecutive SIS domains span residues 298–437 (SDQE…ARGT) and 470–615 (LAYR…VDKP). The active-site For Fru-6P isomerization activity is the K620.

As to quaternary structure, homodimer.

The protein resides in the cytoplasm. The catalysed reaction is D-fructose 6-phosphate + L-glutamine = D-glucosamine 6-phosphate + L-glutamate. In terms of biological role, catalyzes the first step in hexosamine metabolism, converting fructose-6P into glucosamine-6P using glutamine as a nitrogen source. In Mycobacterium leprae (strain TN), this protein is Glutamine--fructose-6-phosphate aminotransferase [isomerizing].